The chain runs to 226 residues: ATP synthase F(0) complex subunit a (226 aa).

Helical transmembrane passes span 12–32, 68–88, 97–117, 138–158, 182–202, and 203–223; these read PTVL…LLIP, WSLM…LGLL, QLSM…AMGL, IPML…ALAV, LAIN…LTIL, and ETAI…LYLH.

It belongs to the ATPase A chain family. Component of the ATP synthase complex composed at least of ATP5F1A/subunit alpha, ATP5F1B/subunit beta, ATP5MC1/subunit c (homooctomer), MT-ATP6/subunit a, MT-ATP8/subunit 8, ATP5ME/subunit e, ATP5MF/subunit f, ATP5MG/subunit g, ATP5MK/subunit k, ATP5MJ/subunit j, ATP5F1C/subunit gamma, ATP5F1D/subunit delta, ATP5F1E/subunit epsilon, ATP5PF/subunit F6, ATP5PB/subunit b, ATP5PD/subunit d, ATP5PO/subunit OSCP. ATP synthase complex consists of a soluble F(1) head domain (subunits alpha(3) and beta(3)) - the catalytic core - and a membrane F(0) domain - the membrane proton channel (subunits c, a, 8, e, f, g, k and j). These two domains are linked by a central stalk (subunits gamma, delta, and epsilon) rotating inside the F1 region and a stationary peripheral stalk (subunits F6, b, d, and OSCP). Interacts with DNAJC30; interaction is direct.

It is found in the mitochondrion inner membrane. The enzyme catalyses H(+)(in) = H(+)(out). Its function is as follows. Subunit a, of the mitochondrial membrane ATP synthase complex (F(1)F(0) ATP synthase or Complex V) that produces ATP from ADP in the presence of a proton gradient across the membrane which is generated by electron transport complexes of the respiratory chain. ATP synthase complex consist of a soluble F(1) head domain - the catalytic core - and a membrane F(1) domain - the membrane proton channel. These two domains are linked by a central stalk rotating inside the F(1) region and a stationary peripheral stalk. During catalysis, ATP synthesis in the catalytic domain of F(1) is coupled via a rotary mechanism of the central stalk subunits to proton translocation. With the subunit c (ATP5MC1), forms the proton-conducting channel in the F(0) domain, that contains two crucial half-channels (inlet and outlet) that facilitate proton movement from the mitochondrial intermembrane space (IMS) into the matrix. Protons are taken up via the inlet half-channel and released through the outlet half-channel, following a Grotthuss mechanism. The sequence is that of ATP synthase F(0) complex subunit a from Pongo abelii (Sumatran orangutan).